The following is a 171-amino-acid chain: Translationally-controlled tumor protein homolog (171 aa).

The region spanning Met-1–Cys-171 is the TCTP domain.

Belongs to the TCTP family.

It is found in the cytoplasm. Functionally, involved in calcium binding and microtubule stabilization. This chain is Translationally-controlled tumor protein homolog (tpt1), found in Danio rerio (Zebrafish).